The chain runs to 800 residues: DEP domain-containing protein 1A (800 aa).

Residues Phe-24–Ser-108 enclose the DEP domain. 3 disordered regions span residues Glu-147–Glu-173, Ser-306–Pro-326, and Ile-459–Arg-485. Positions Pro-281 to Gln-321 constitute a Rho-GAP domain. A compositionally biased stretch (low complexity) spans Ile-459–Ser-468.

This Danio rerio (Zebrafish) protein is DEP domain-containing protein 1A (depdc1a).